Here is a 307-residue protein sequence, read N- to C-terminus: Acyl transferase (307 aa).

Active-site charge relay system residues include S116, D213, and H243.

The protein belongs to the LuxD family.

The protein operates within lipid metabolism; fatty acid reduction for biolumincescence. Acyl transferase is part of the fatty acid reductase system required for aldehyde biosynthesis; it produces fatty acids for the luminescent reaction. The chain is Acyl transferase from Photorhabdus laumondii subsp. laumondii (strain DSM 15139 / CIP 105565 / TT01) (Photorhabdus luminescens subsp. laumondii).